A 1401-amino-acid polypeptide reads, in one-letter code: DNA-directed RNA polymerase subunit beta' (1401 aa).

4 residues coordinate Zn(2+): C70, C72, C85, and C88. The Mg(2+) site is built by D460, D462, and D464. Residues C808, C882, C889, and C892 each contribute to the Zn(2+) site.

The protein belongs to the RNA polymerase beta' chain family. The RNAP catalytic core consists of 2 alpha, 1 beta, 1 beta' and 1 omega subunit. When a sigma factor is associated with the core the holoenzyme is formed, which can initiate transcription. It depends on Mg(2+) as a cofactor. The cofactor is Zn(2+).

The enzyme catalyses RNA(n) + a ribonucleoside 5'-triphosphate = RNA(n+1) + diphosphate. Functionally, DNA-dependent RNA polymerase catalyzes the transcription of DNA into RNA using the four ribonucleoside triphosphates as substrates. The protein is DNA-directed RNA polymerase subunit beta' of Legionella pneumophila (strain Paris).